Here is a 246-residue protein sequence, read N- to C-terminus: UDP-N-acetyl-D-mannosaminuronic acid transferase (246 aa).

Belongs to the glycosyltransferase 26 family.

It carries out the reaction UDP-N-acetyl-alpha-D-mannosaminouronate + N-acetyl-alpha-D-glucosaminyl-di-trans,octa-cis-undecaprenyl diphosphate = beta-D-ManNAcA-(1-&gt;4)-alpha-D-GlcNAc-di-trans,octa-cis-undecaprenyl diphosphate + UDP + H(+). Its pathway is bacterial outer membrane biogenesis; enterobacterial common antigen biosynthesis. Its function is as follows. Catalyzes the synthesis of Und-PP-GlcNAc-ManNAcA (Lipid II), the second lipid-linked intermediate involved in enterobacterial common antigen (ECA) synthesis. The protein is UDP-N-acetyl-D-mannosaminuronic acid transferase of Escherichia coli O7:K1 (strain IAI39 / ExPEC).